Reading from the N-terminus, the 477-residue chain is Probable cytosolic Fe-S cluster assembly factor GG21400 (477 aa).

8 residues coordinate [4Fe-4S] cluster: Cys-23, Cys-68, Cys-71, Cys-74, Cys-187, Cys-243, Cys-395, and Cys-399.

This sequence belongs to the NARF family.

Its function is as follows. Component of the cytosolic iron-sulfur (Fe/S) protein assembly machinery. Required for maturation of extramitochondrial Fe/S proteins. The polypeptide is Probable cytosolic Fe-S cluster assembly factor GG21400 (Drosophila erecta (Fruit fly)).